The sequence spans 131 residues: Universal stress protein C (131 aa).

It belongs to the universal stress protein A family.

The protein localises to the cytoplasm. Its function is as follows. Required for resistance to DNA-damaging agents. This chain is Universal stress protein C (uspC), found in Salmonella typhi.